The chain runs to 183 residues: Acireductone dioxygenase (183 aa).

The Fe(2+) site is built by His-99, His-101, Glu-105, and His-144. His-99, His-101, Glu-105, and His-144 together coordinate Ni(2+).

The protein belongs to the acireductone dioxygenase (ARD) family. In terms of assembly, monomer. Fe(2+) serves as cofactor. Requires Ni(2+) as cofactor.

It catalyses the reaction 1,2-dihydroxy-5-(methylsulfanyl)pent-1-en-3-one + O2 = 3-(methylsulfanyl)propanoate + CO + formate + 2 H(+). The catalysed reaction is 1,2-dihydroxy-5-(methylsulfanyl)pent-1-en-3-one + O2 = 4-methylsulfanyl-2-oxobutanoate + formate + 2 H(+). The protein operates within amino-acid biosynthesis; L-methionine biosynthesis via salvage pathway; L-methionine from S-methyl-5-thio-alpha-D-ribose 1-phosphate: step 5/6. Catalyzes 2 different reactions between oxygen and the acireductone 1,2-dihydroxy-3-keto-5-methylthiopentene (DHK-MTPene) depending upon the metal bound in the active site. Fe-containing acireductone dioxygenase (Fe-ARD) produces formate and 2-keto-4-methylthiobutyrate (KMTB), the alpha-ketoacid precursor of methionine in the methionine recycle pathway. Ni-containing acireductone dioxygenase (Ni-ARD) produces methylthiopropionate, carbon monoxide and formate, and does not lie on the methionine recycle pathway. The chain is Acireductone dioxygenase from Microcystis aeruginosa.